The chain runs to 248 residues: MAGHSQFKNIMHRKGRQDAQKSKLFSKLAREITVAAKLGTPDPAMNPRLRAAVIAARAENMPKDNIERAIKKASGNDAESYDELRYEGYGPGGVAVIMEVLTDNRNRAASDIRSYFTKSGGNLGETGSVSFMFDRLGVIEYDADKASVDDMLEAAIEAGADDVVSDEGGHEIYASQDTFRDVAKALESTFGEARKVALIWKPQNTIAVDDNTGEKLLKLIDLLNEHDDVQNVYANFEVSDALIAKLGG.

Residues 1–21 (MAGHSQFKNIMHRKGRQDAQK) are disordered.

This sequence belongs to the TACO1 family.

Its subcellular location is the cytoplasm. This is Probable transcriptional regulatory protein Nwi_2729 from Nitrobacter winogradskyi (strain ATCC 25391 / DSM 10237 / CIP 104748 / NCIMB 11846 / Nb-255).